The following is a 585-amino-acid chain: Switch-associated protein 70 (585 aa).

One can recognise a PH domain in the interval 210-306 (DVLKQGYMIK…WIQAIHSTIH (97 aa)). A coiled-coil region spans residues 316–532 (HKEARQRRKE…KLEMAAKMTK (217 aa)).

In terms of assembly, the SWAP complex consists of NPM1, NCL, PARP1 and SWAP70. Tyrosine-phosphorylated.

Its subcellular location is the cytoplasm. It localises to the cell membrane. It is found in the nucleus. The protein resides in the cell projection. The protein localises to the lamellipodium. Phosphatidylinositol 3,4,5-trisphosphate-dependent guanine nucleotide exchange factor (GEF) which, independently of RAS, transduces signals from tyrosine kinase receptors to RAC. It also mediates signaling of membrane ruffling. Regulates the actin cytoskeleton as an effector or adapter protein in response to agonist stimulated phosphatidylinositol (3,4)-bisphosphate production and cell protrusion. This is Switch-associated protein 70 (SWAP70) from Bos taurus (Bovine).